The sequence spans 365 residues: Fucose-specific lectin (365 aa).

Positions 1-21 are cleaved as a signal peptide; that stretch reads MKLLHFTILLQVSLFPASSLA. 6 tandem repeats follow at residues 22 to 79, 80 to 141, 142 to 206, 207 to 261, 262 to 309, and 310 to 365. Residues 22–365 are 6 X approximate tandem repeats; it reads QAGGNNTEVQ…RRGILAIPPA (344 aa). Asparagine 26 carries an N-linked (GlcNAc...) asparagine glycan. Residues arginine 51, glutamate 63, and tryptophan 70 each contribute to the beta-L-fucose site. Residues asparagine 76 and asparagine 85 are each glycosylated (N-linked (GlcNAc...) asparagine). Arginine 111 is a beta-L-fucose binding site. N-linked (GlcNAc...) asparagine glycosylation occurs at asparagine 118. Positions 123, 132, 164, 176, 201, and 231 each coordinate beta-L-fucose. N-linked (GlcNAc...) asparagine glycosylation is present at asparagine 248. 3 residues coordinate beta-L-fucose: arginine 283, arginine 333, and glutamate 347.

It belongs to the fungal fucose-specific lectin family. Homodimer.

The protein localises to the secreted. Its function is as follows. Probable L-fucose-binding lectin. The sequence is that of Fucose-specific lectin from Arthroderma benhamiae (strain ATCC MYA-4681 / CBS 112371) (Trichophyton mentagrophytes).